Reading from the N-terminus, the 591-residue chain is Probable translation initiation factor IF-2 (591 aa).

One can recognise a tr-type G domain in the interval 7–223 (LRTPIVCVMG…LLGLAQKFLE (217 aa)). Residues 16–23 (GHVDHGKT) form a G1 region. GTP is bound at residue 16 to 23 (GHVDHGKT). The G2 stretch occupies residues 41 to 45 (AITQH). The segment at 78–81 (DTPG) is G3. GTP-binding positions include 78-82 (DTPGH) and 132-135 (NKID). The segment at 132–135 (NKID) is G4. The G5 stretch occupies residues 200–202 (SAM).

Belongs to the TRAFAC class translation factor GTPase superfamily. Classic translation factor GTPase family. IF-2 subfamily.

Its function is as follows. Function in general translation initiation by promoting the binding of the formylmethionine-tRNA to ribosomes. Seems to function along with eIF-2. In Methanosarcina barkeri (strain Fusaro / DSM 804), this protein is Probable translation initiation factor IF-2.